The chain runs to 591 residues: Beta-fructofuranosidase, insoluble isoenzyme CWINV4 (591 aa).

The N-terminal stretch at 1–22 (MAISNVISVLLLLLVLINLSNQ) is a signal peptide. Substrate-binding positions include 61 to 64 (WIND), Gln-80, Trp-88, and 123 to 124 (WS). Asp-64 is a catalytic residue. N-linked (GlcNAc...) asparagine glycosylation is found at Asn-145 and Asn-182. Substrate is bound by residues 187–188 (RD), Glu-242, and Asp-276. N-linked (GlcNAc...) asparagine glycosylation is found at Asn-336, Asn-472, and Asn-565. Cysteines 436 and 484 form a disulfide.

Belongs to the glycosyl hydrolase 32 family. As to expression, expressed in flowers, and seeds, and, to a lower extent, in seedlings.

Its subcellular location is the secreted. The protein localises to the extracellular space. It is found in the apoplast. It localises to the cell wall. It catalyses the reaction Hydrolysis of terminal non-reducing beta-D-fructofuranoside residues in beta-D-fructofuranosides.. The protein is Beta-fructofuranosidase, insoluble isoenzyme CWINV4 (CWINV4) of Arabidopsis thaliana (Mouse-ear cress).